The sequence spans 122 residues: Large ribosomal subunit protein uL14 (122 aa).

The protein belongs to the universal ribosomal protein uL14 family. In terms of assembly, part of the 50S ribosomal subunit. Forms a cluster with proteins L3 and L19. In the 70S ribosome, L14 and L19 interact and together make contacts with the 16S rRNA in bridges B5 and B8.

Its function is as follows. Binds to 23S rRNA. Forms part of two intersubunit bridges in the 70S ribosome. The chain is Large ribosomal subunit protein uL14 from Alkaliphilus oremlandii (strain OhILAs) (Clostridium oremlandii (strain OhILAs)).